The following is a 469-amino-acid chain: MDVENEQILNVNPADPDNLSDSLFSGDEESAGTEEIKNEINGNWISASSINEARINAKAKRRLRKNSSRDSGRGDSVSDNGSDTLRSGVTVPTSPKGRLLDRRSRSGKGRGLPKKGGAGGKGVWGTPGQVYDVEEVDVKDPNYDDDQENCVYETVVLPLDERAFEKTLTPIIQEYFEHGDTNEVAEMLRDLNLGEMKSGVPVLAVSLALEGKASHREMTSKLLSDLCGTVMSTSDVEKSFDKSLKDLPELALDTPRAPQLVGQFIARAVGDGILCNTYIDSYKGTVDCVQARAALDKATVLLSMSKGGKRKDSVWGSGGGQQSVNHLVKEIDMLLKEYLLSGDISEAEHCLKELEVPHFHHELVYEAIIMVLESTGESTFKMILDLLKSLWKSSTITVDQMKRGYERIYNEIPDINLDVPHSYSVLERFVEECFQAGIISKQLRDLCPSRGRKRFVSEGDGGRLKPESY.

At Met1 the chain carries N-acetylmethionine. 2 disordered regions span residues Met1–Asn38 and Lys58–Gly128. Ser25 carries the phosphoserine modification. A Nuclear localization signal motif is present at residues Lys58–Arg64. A Phosphoserine; by PKB and RPS6KB1 modification is found at Ser67. Phosphoserine is present on residues Ser68, Ser71, Ser76, and Ser78. A Phosphodegron motif is present at residues Asp70–Ser76. Low complexity predominate over residues Gly74–Asp83. Polar residues predominate over residues Thr84–Thr93. At Ser94 the chain carries Phosphoserine. Positions Lys114–Gly125 are enriched in gly residues. Residue Tyr152 is modified to Phosphotyrosine. In terms of domain architecture, MI 1 spans Ala163–Gly284. Phosphoserine is present on residues Ser313 and Ser317. Residues His326–Ser449 enclose the MI 2 domain. The Nuclear localization signal signature appears at Pro448–Arg454. A Phosphoserine; by PKB modification is found at Ser457.

It belongs to the PDCD4 family. In terms of assembly, interacts (via MI domains) with EIF4A2. Interacts (via MI domains) with EIF4A1 (via N-terminal domain). Heterotrimer with EIF4A1; one molecule of PDCD4 binds two molecules of EIF4A1. Interacts with EIF4G1. May form a complex with EIF4A1 and EIF4G1. The interaction between PDCD4 and EIF4A1 interferes with the interaction between EIF4A1 and EIF4G. When phosphorylated, interacts with BTRC and FBXW11. Post-translationally, polyubiquitinated, leading to its proteasomal degradation. Rapidly degraded in response to mitogens. Phosphorylation of the phosphodegron promotes interaction with BTRC and proteasomal degradation. Phosphorylated at Ser-67 by RPS6KB1 in response to mitogens; phosphorylation promotes proteasomal degradation of PDCD4.

The protein localises to the nucleus. It localises to the cytoplasm. In terms of biological role, inhibits translation initiation and cap-dependent translation. May excert its function by hindering the interaction between EIF4A1 and EIF4G. Inhibits the helicase activity of EIF4A. Modulates the activation of JUN kinase. Down-regulates the expression of MAP4K1, thus inhibiting events important in driving invasion, namely, MAPK85 activation and consequent JUN-dependent transcription. May play a role in apoptosis. Tumor suppressor. Inhibits tumor promoter-induced neoplastic transformation. Binds RNA. The chain is Programmed cell death protein 4 (PDCD4) from Pongo abelii (Sumatran orangutan).